The chain runs to 391 residues: DNA replication and repair protein RecF (391 aa).

Residue 30 to 37 coordinates ATP; sequence GLNGQGKT.

It belongs to the RecF family.

It is found in the cytoplasm. The RecF protein is involved in DNA metabolism; it is required for DNA replication and normal SOS inducibility. RecF binds preferentially to single-stranded, linear DNA. It also seems to bind ATP. The chain is DNA replication and repair protein RecF from Kineococcus radiotolerans (strain ATCC BAA-149 / DSM 14245 / SRS30216).